We begin with the raw amino-acid sequence, 303 residues long: D-alanine--D-alanine ligase B (303 aa).

The region spanning 103-298 (KLLWKGAGLP…YEDLCLKVLD (196 aa)) is the ATP-grasp domain. Residue 129–184 (ERQLGLPIFVKPSTEGSSIGVTKVKQPGELRAAFEEARKYDKVVIAEQFIGGGEYT) coordinates ATP. Residues D252, E265, and N267 each contribute to the Mg(2+) site.

It belongs to the D-alanine--D-alanine ligase family. Requires Mg(2+) as cofactor. It depends on Mn(2+) as a cofactor.

It localises to the cytoplasm. The catalysed reaction is 2 D-alanine + ATP = D-alanyl-D-alanine + ADP + phosphate + H(+). It participates in cell wall biogenesis; peptidoglycan biosynthesis. Cell wall formation. The protein is D-alanine--D-alanine ligase B of Chromobacterium violaceum (strain ATCC 12472 / DSM 30191 / JCM 1249 / CCUG 213 / NBRC 12614 / NCIMB 9131 / NCTC 9757 / MK).